The primary structure comprises 472 residues: Glutamyl-tRNA(Gln) amidotransferase subunit A (472 aa).

Active-site charge relay system residues include K69 and S144. The active-site Acyl-ester intermediate is S168.

This sequence belongs to the amidase family. GatA subfamily. Heterotrimer of A, B and C subunits.

It carries out the reaction L-glutamyl-tRNA(Gln) + L-glutamine + ATP + H2O = L-glutaminyl-tRNA(Gln) + L-glutamate + ADP + phosphate + H(+). Its function is as follows. Allows the formation of correctly charged Gln-tRNA(Gln) through the transamidation of misacylated Glu-tRNA(Gln) in organisms which lack glutaminyl-tRNA synthetase. The reaction takes place in the presence of glutamine and ATP through an activated gamma-phospho-Glu-tRNA(Gln). The chain is Glutamyl-tRNA(Gln) amidotransferase subunit A from Sulfurisphaera tokodaii (strain DSM 16993 / JCM 10545 / NBRC 100140 / 7) (Sulfolobus tokodaii).